A 332-amino-acid chain; its full sequence is Glycerol-3-phosphate dehydrogenase [NAD(P)+] (332 aa).

Residues serine 11, tryptophan 12, arginine 32, arginine 33, and lysine 106 each contribute to the NADPH site. Lysine 106 and glycine 136 together coordinate sn-glycerol 3-phosphate. Alanine 140 contributes to the NADPH binding site. Sn-glycerol 3-phosphate is bound by residues lysine 191, aspartate 244, serine 254, arginine 255, and asparagine 256. Residue lysine 191 is the Proton acceptor of the active site. An NADPH-binding site is contributed by arginine 255. Residues valine 280 and glutamate 282 each contribute to the NADPH site.

It belongs to the NAD-dependent glycerol-3-phosphate dehydrogenase family.

Its subcellular location is the cytoplasm. It catalyses the reaction sn-glycerol 3-phosphate + NAD(+) = dihydroxyacetone phosphate + NADH + H(+). The enzyme catalyses sn-glycerol 3-phosphate + NADP(+) = dihydroxyacetone phosphate + NADPH + H(+). Its pathway is membrane lipid metabolism; glycerophospholipid metabolism. In terms of biological role, catalyzes the reduction of the glycolytic intermediate dihydroxyacetone phosphate (DHAP) to sn-glycerol 3-phosphate (G3P), the key precursor for phospholipid synthesis. This is Glycerol-3-phosphate dehydrogenase [NAD(P)+] from Corynebacterium kroppenstedtii (strain DSM 44385 / JCM 11950 / CIP 105744 / CCUG 35717).